The following is a 314-amino-acid chain: Malate dehydrogenase (314 aa).

NAD(+) contacts are provided by residues 11 to 16 (GSGNIG) and Asp35. Arg84 and Arg90 together coordinate substrate. NAD(+)-binding positions include Asn97 and 120 to 122 (ITN). 2 residues coordinate substrate: Asn122 and Arg153. His177 (proton acceptor) is an active-site residue.

The protein belongs to the LDH/MDH superfamily. MDH type 3 family.

It catalyses the reaction (S)-malate + NAD(+) = oxaloacetate + NADH + H(+). Catalyzes the reversible oxidation of malate to oxaloacetate. This is Malate dehydrogenase from Rickettsia typhi (strain ATCC VR-144 / Wilmington).